The sequence spans 84 residues: Large ribosomal subunit protein bL27 (84 aa).

The interval 1–25 (MSHKKAGGSTRNGRDSNAQRRGVKK) is disordered.

The protein belongs to the bacterial ribosomal protein bL27 family.

The protein is Large ribosomal subunit protein bL27 of Desulforapulum autotrophicum (strain ATCC 43914 / DSM 3382 / VKM B-1955 / HRM2) (Desulfobacterium autotrophicum).